The sequence spans 921 residues: Probable serine/threonine-protein kinase DDB_G0275165 (921 aa).

The Protein kinase domain occupies 23 to 277; it reads FDPLSIIGSG…SNILGLLEYI (255 aa). Residues 29–37 and K50 each bind ATP; that span reads IGSGGFGKV. D147 acts as the Proton acceptor in catalysis. Disordered regions lie at residues 289–453, 465–492, 530–571, 583–653, 671–698, 737–813, 833–858, and 877–921; these read DYEP…SFPR, RGEEEPLVVSQKDQLEHDLEGGDDNEED, RPWN…SDSN, NPTP…PTTI, STATAQPKSRSNSNPPKPTVVISNSNNN, IQPL…SRSL, SSQQSNLVHQPSSSSSSTKQPPTSQF, and FEKS…KPKK. Low complexity-rich tracts occupy residues 310 to 352, 400 to 412, and 429 to 445; these read NNNN…NNNN, SNINGGVNNNNSN, and NINGCVNNNNNNSNNNN. Composition is skewed to low complexity over residues 539–550 and 583–638; these read NNNNKNNNNNEK and NPTP…SLSS. A compositionally biased stretch (polar residues) spans 643–653; that stretch reads PQSTYKVPTTI. Low complexity-rich tracts occupy residues 748-775, 842-857, and 892-910; these read TVAATTATTPTTATSTTIKSSPTTPTST, QPSSSSSSTKQPPTSQ, and TSSSLTSNSNSSIPAPSSP.

This sequence belongs to the protein kinase superfamily. TKL Ser/Thr protein kinase family.

It catalyses the reaction L-seryl-[protein] + ATP = O-phospho-L-seryl-[protein] + ADP + H(+). The catalysed reaction is L-threonyl-[protein] + ATP = O-phospho-L-threonyl-[protein] + ADP + H(+). The protein is Probable serine/threonine-protein kinase DDB_G0275165 of Dictyostelium discoideum (Social amoeba).